We begin with the raw amino-acid sequence, 261 residues long: Lys-63-specific deubiquitinase BRCC36 (261 aa).

The MPN domain maps to 6-149 (VHIQGDAFLV…YTCFQSVQAQ (144 aa)). 3 residues coordinate Zn(2+): His92, His94, and Asp105. Positions 92–105 (HSHPHITVWPSHVD) match the JAMM motif motif.

This sequence belongs to the peptidase M67A family. BRCC36 subfamily. As to quaternary structure, component of the BRCA1-A complex, at least composed of brca1, bard1, uimc1/rap80, abraxas1, brcc3/brcc36, babam2 and babam1/nba1. In the BRCA1-A complex, interacts directly with ABRAXAS1 and babam2. Component of the BRISC complex, at least composed of ABRAXAS2, brcc3/brcc36, babam2 and babam1/nba1. Within the complex, interacts directly with abraxas2. Both the BRCA1-A complex and the BRISC complex bind polyubiquitin. Zn(2+) serves as cofactor.

It is found in the nucleus. The protein localises to the cytoplasm. The protein resides in the cytoskeleton. Its subcellular location is the spindle pole. Its function is as follows. Metalloprotease that specifically cleaves 'Lys-63'-linked polyubiquitin chains. Does not have activity toward 'Lys-48'-linked polyubiquitin chains. Component of the BRCA1-A complex, a complex that specifically recognizes 'Lys-63'-linked ubiquitinated histones H2A and H2AX at DNA lesions sites, leading to target the brca1-bard1 heterodimer to sites of DNA damage at double-strand breaks (DSBs). In the BRCA1-A complex, it specifically removes 'Lys-63'-linked ubiquitin on histones H2A and H2AX, antagonizing the rnf8-dependent ubiquitination at double-strand breaks (DSBs). Catalytic subunit of the BRISC complex, a multiprotein complex that specifically cleaves 'Lys-63'-linked ubiquitin in various substrates. Mediates the specific 'Lys-63'-specific deubiquitination associated with the COP9 signalosome complex (CSN), via the interaction of the BRISC complex with the CSN complex. The BRISC complex is required for normal mitotic spindle assembly and microtubule attachment to kinetochores via its role in deubiquitinating numa1. Plays a role in interferon signaling via its role in the deubiquitination of the interferon receptor ifnar1; deubiquitination increases ifnar1 activity by enhancing its stability and cell surface expression. Acts as a regulator of the NLRP3 inflammasome by mediating deubiquitination of nlrp3. Down-regulates the response to bacterial lipopolysaccharide (LPS) via its role in ifnar1 deubiquitination. The sequence is that of Lys-63-specific deubiquitinase BRCC36 (brcc3) from Xenopus laevis (African clawed frog).